The sequence spans 427 residues: Serine--tRNA ligase (427 aa).

An L-serine-binding site is contributed by 231–233 (TAE). Residue 262–264 (RSE) coordinates ATP. E285 serves as a coordination point for L-serine. 349 to 352 (EISS) serves as a coordination point for ATP. L-serine is bound at residue S385.

It belongs to the class-II aminoacyl-tRNA synthetase family. Type-1 seryl-tRNA synthetase subfamily. In terms of assembly, homodimer. The tRNA molecule binds across the dimer.

It is found in the cytoplasm. It carries out the reaction tRNA(Ser) + L-serine + ATP = L-seryl-tRNA(Ser) + AMP + diphosphate + H(+). It catalyses the reaction tRNA(Sec) + L-serine + ATP = L-seryl-tRNA(Sec) + AMP + diphosphate + H(+). Its pathway is aminoacyl-tRNA biosynthesis; selenocysteinyl-tRNA(Sec) biosynthesis; L-seryl-tRNA(Sec) from L-serine and tRNA(Sec): step 1/1. Its function is as follows. Catalyzes the attachment of serine to tRNA(Ser). Is also able to aminoacylate tRNA(Sec) with serine, to form the misacylated tRNA L-seryl-tRNA(Sec), which will be further converted into selenocysteinyl-tRNA(Sec). This is Serine--tRNA ligase from Sinorhizobium medicae (strain WSM419) (Ensifer medicae).